The chain runs to 215 residues: Pyrrolidone-carboxylate peptidase (215 aa).

Catalysis depends on residues Glu78, Cys141, and His165.

The protein belongs to the peptidase C15 family. Homotetramer.

The protein resides in the cytoplasm. It catalyses the reaction Release of an N-terminal pyroglutamyl group from a polypeptide, the second amino acid generally not being Pro.. Removes 5-oxoproline from various penultimate amino acid residues except L-proline. The sequence is that of Pyrrolidone-carboxylate peptidase from Streptococcus pyogenes serotype M12 (strain MGAS2096).